Here is a 375-residue protein sequence, read N- to C-terminus: MPILDTPYASLDLIRQPEQPNEPLQAFDAADEYLLATLHGQGLPAATRVLILNDSFGALACALAAHVEVTSSGDSHLAHLALQKNLARNDLPADRVRFVPASEAAQGPFDRVLIRVPKTLSLLEEQLIRLHDQLAPGAQVIAAAMIKHLPRAAGDLLEQYIGPVQASLAVKKARLLSATPVDKPAPQSPYPTRYQLDQPKLELLNHANLFCREGLDIGTRAFLPHLPKALGAIRVADLGCGNGVLGIVYALGNPQAELTLVDESYMAVQSARENWQVILGERPADIRAGDGLAEQPPGSLDLVLCNPPFHQQQVVGDFLAWRMFTQAKAALTKGGELWIVGNRHLGYHLKLKRLFGNAEQVAATPKFVVLRSIKA.

Belongs to the methyltransferase superfamily. RlmG family.

It localises to the cytoplasm. The enzyme catalyses guanosine(1835) in 23S rRNA + S-adenosyl-L-methionine = N(2)-methylguanosine(1835) in 23S rRNA + S-adenosyl-L-homocysteine + H(+). Its function is as follows. Specifically methylates the guanine in position 1835 (m2G1835) of 23S rRNA. The protein is Ribosomal RNA large subunit methyltransferase G of Stutzerimonas stutzeri (strain A1501) (Pseudomonas stutzeri).